Consider the following 401-residue polypeptide: Phosphonopyruvate decarboxylase (401 aa).

A disordered region spans residues tryptophan 382–arginine 401. Over residues alanine 384–arginine 401 the composition is skewed to low complexity.

It belongs to the TPP enzyme family. Thiamine diphosphate serves as cofactor. It depends on Mg(2+) as a cofactor.

It catalyses the reaction 3-phosphonopyruvate + H(+) = phosphonoacetaldehyde + CO2. Its pathway is secondary metabolite biosynthesis; bialaphos biosynthesis. Functionally, involved in the biosynthesis of phosphinothricin tripeptide (PTT), also known as bialaphos (BA), a natural-product antibiotic and potent herbicide. Catalyzes the decarboxylation of phosphonopyruvate (PnPy) to generate phosphonoacetaldehyde (PnAA). This is Phosphonopyruvate decarboxylase from Streptomyces hygroscopicus.